The chain runs to 2620 residues: Ankyrin repeat and KH domain-containing protein mask-1 (2620 aa).

ANK repeat units lie at residues 254–283, 288–318, 361–390, 402–431, 437–466, 470–502, 507–536, 538–566, 568–597, 600–629, 634–663, and 667–697; these read SKIT…DPNV, NCNT…KKPD, ERDS…KNPP, ERYS…PADL, IEPS…KIEE, KKNT…EVDV, TGDT…DLTA, KTSP…TIPQ, QLSR…DLNF, DERT…SVNF, NDAT…DPML, and DGVN…NMPM. 3 disordered regions span residues 699–726, 994–1032, and 1192–1229; these read KDPP…SGQD, HQEE…QPGA, and SLMA…AIDK. The segment covering 1012-1029 has biased composition (polar residues); that stretch reads TSLTAPNPADTSDVTTKQ. The span at 1192-1206 shows a compositional bias: low complexity; it reads SLMAKSVQSQQQQGQ. The span at 1210 to 1221 shows a compositional bias: basic and acidic residues; it reads THSEGDGAERAK. ANK repeat units follow at residues 1234-1263, 1267-1296, 1301-1330, 1334-1363, 1369-1398, 1403-1432, 1436-1465, 1471-1500, 1504-1533, and 1537-1566; these read TLET…NIEH, KGFS…AIEA, TKDT…NKEH, SDYT…EINS, LGIS…DINA, NRNT…NVEH, TGLT…DTNA, TKDT…AVDV, KGCT…DPDM, and RKIS…QFPN. Residues 1596-1648 adopt a coiled-coil conformation; it reads AKKAQAESAELAAQKLLELIDEEKVQKEVKKQKQKDKKIKKKEEKKIKKQEAE. 2 disordered regions span residues 1621–1720 and 1759–1804; these read QKEV…AEEP and KEGK…EIDT. Basic and acidic residues predominate over residues 1636–1647; the sequence is KKEEKKIKKQEA. Residues 1648-1661 show a composition bias toward acidic residues; that stretch reads EPEPEPEPEPEPVP. 2 stretches are compositionally biased toward low complexity: residues 1665-1681 and 1769-1791; these read PVVI…IVVE and KSGY…TTSS. One can recognise a KH domain in the interval 1807-1873; that stretch reads ESSWKLTIPA…EMVRYAMNII (67 aa). Positions 1899–1913 are enriched in polar residues; that stretch reads ASSFSSEGTSKSAVD. Disordered regions lie at residues 1899-1962, 1976-2010, 2067-2143, 2267-2294, 2307-2343, 2372-2391, 2429-2448, and 2496-2620; these read ASSF…GNVW, LMET…QASE, SVQS…QTQN, NATS…VTTG, SFAP…QQQQ, QHQS…KFSM, QESS…NSYY, and QKKQ…SSNW. Over residues 1917–1946 the composition is skewed to low complexity; the sequence is APSSIPKSLSSASIARQSASPIPQQSSQRS. Residues 1982 to 1993 are compositionally biased toward polar residues; that stretch reads ISQSPKQAPQIP. Composition is skewed to low complexity over residues 1994–2006, 2067–2078, and 2100–2118; these read STQQ…SRQD, SVQSVQHMQQQQ, and SQPI…SSFS. 2 stretches are compositionally biased toward polar residues: residues 2267 to 2286 and 2325 to 2339; these read NATS…VQQP and RSQS…STNI. The segment covering 2505 to 2528 has biased composition (polar residues); sequence SFMHNSQQPQPFGAPSNASANQSR. Over residues 2535-2547 the composition is skewed to pro residues; that stretch reads RPQPPPFVAPQAP. The span at 2552-2565 shows a compositional bias: polar residues; the sequence is SLGNASSTTNPSRT. Composition is skewed to low complexity over residues 2566 to 2588 and 2597 to 2620; these read SMQQ…QMPQ and QQQQ…SSNW.

It belongs to the mask family.

Its subcellular location is the cytoplasm. The protein is Ankyrin repeat and KH domain-containing protein mask-1 of Caenorhabditis elegans.